Reading from the N-terminus, the 396-residue chain is DnaJ homolog subfamily A member 1 (396 aa).

The 63-residue stretch at 6–68 (TYYDVLGVKP…KKRELYDKGG (63 aa)) folds into the J domain. Lysine 66 bears the N6-acetyllysine mark. Phosphoserine is present on serine 83. A CR-type zinc finger spans residues 120-204 (GATRKLALQK…CNGRKIVREK (85 aa)). Zn(2+)-binding residues include cysteine 133, cysteine 136, cysteine 149, cysteine 152, cysteine 176, cysteine 179, cysteine 192, and cysteine 195. CXXCXGXG motif repeat units lie at residues 133-140 (CDKCEGRG), 149-156 (CPNCRGTG), 176-183 (CMECQGHG), and 192-199 (CKSCNGRK). Phosphoserine is present on serine 334. The interval 351–396 (VEETDEMDQVELVDFDPNQERRRHYNGEAYEDDEHHPRGGVQCQTS) is disordered. Over residues 352–364 (EETDEMDQVELVD) the composition is skewed to acidic residues. Position 380 is a phosphotyrosine (tyrosine 380). Cysteine 393 is subject to Cysteine methyl ester. Cysteine 393 carries the S-farnesyl cysteine lipid modification. A propeptide spans 394–396 (QTS) (removed in mature form).

In terms of assembly, identified in a complex with HSPA1B and BAX. Interacts with RNF207.

The protein resides in the membrane. It localises to the cytoplasm. It is found in the microsome. The protein localises to the mitochondrion. Its subcellular location is the nucleus. The protein resides in the perinuclear region. In terms of biological role, co-chaperone for HSPA8/Hsc70. Plays a role in protein transport into mitochondria via its role as co-chaperone. Functions as co-chaperone for HSPA1B and negatively regulates the translocation of BAX from the cytosol to mitochondria in response to cellular stress, thereby protecting cells against apoptosis. Stimulates ATP hydrolysis, but not the folding of unfolded proteins mediated by HSPA1A (in vitro). Promotes apoptosis in response to cellular stress mediated by exposure to anisomycin or UV. The protein is DnaJ homolog subfamily A member 1 (DNAJA1) of Pongo abelii (Sumatran orangutan).